A 694-amino-acid chain; its full sequence is Frizzled-8 (694 aa).

The N-terminal stretch at 1-27 (MEWGYLLEVTSLLAALALLQRSSGAAA) is a signal peptide. The Extracellular segment spans residues 28–275 (ASAKELACQE…NPFFSQDERA (248 aa)). Residues 30 to 151 (AKELACQEIT…GNPDTLCMDY (122 aa)) enclose the FZ domain. 5 disulfides stabilise this stretch: Cys-35–Cys-96, Cys-43–Cys-89, Cys-80–Cys-118, Cys-107–Cys-148, and Cys-111–Cys-135. N-linked (GlcNAc...) asparagine glycosylation is present at Asn-49. Residue 71–78 (QFWPLVEI) coordinates hexadecanoate. The tract at residues 95–100 (ICLEDY) is wnt-binding. The segment at 147–152 (LCMDYN) is wnt-binding. The N-linked (GlcNAc...) asparagine glycan is linked to Asn-152. Positions 155–226 (DLTTAAPSPP…KARPPGGGAA (72 aa)) are disordered. A compositionally biased stretch (pro residues) spans 161-175 (PSPPRRLPPPPPGEQ). Positions 176 to 186 (PPSGSGHGRPP) are enriched in low complexity. A compositionally biased stretch (gly residues) spans 210–225 (RGGGGGGKARPPGGGA). The helical transmembrane segment at 276–296 (FTVFWIGLWSVLCFVSTFATV) threads the bilayer. Residues 297–312 (STFLIDMERFKYPERP) are Cytoplasmic-facing. The helical transmembrane segment at 313–333 (IIFLSACYLFVSVGYLVRLVA) threads the bilayer. Residues 334 to 396 (GHEKVACSGG…RYETTGPALC (63 aa)) lie on the Extracellular side of the membrane. The chain crosses the membrane as a helical span at residues 397 to 417 (TVVFLLVYFFGMASSIWWVIL). Residues 418–439 (SLTWFLAAGMKWGNEAIAGYSQ) lie on the Cytoplasmic side of the membrane. The helical transmembrane segment at 440 to 460 (YFHLAAWLVPSVKSIAVLALS) threads the bilayer. At 461–483 (SVDGDPVAGICYVGNQSLDNLRG) the chain is on the extracellular side. The N-linked (GlcNAc...) asparagine glycan is linked to Asn-475. The helical transmembrane segment at 484 to 504 (FVLAPLVIYLFIGTMFLLAGF) threads the bilayer. The Cytoplasmic segment spans residues 505-532 (VSLFRIRSVIKQQDGPTKTHKLEKLMIR). A helical transmembrane segment spans residues 533-553 (LGLFTVLYTVPAAVVVACLFY). Topologically, residues 554–584 (EQHNRPRWEATHNCPCLRDLQPDQARRPDYA) are extracellular. Residues 585–605 (VFMLKYFMCLVVGITSGVWVW) traverse the membrane as a helical segment. Over 606-694 (SGKTLESWRS…YPKQMPLSQV (89 aa)) the chain is Cytoplasmic. Positions 608 to 613 (KTLESW) match the Lys-Thr-X-X-X-Trp motif, mediates interaction with the PDZ domain of Dvl family members motif. A compositionally biased stretch (gly residues) spans 648–664 (GGGGPGGGGGPGGGGGS). The tract at residues 648–668 (GGGGPGGGGGPGGGGGSLYSD) is disordered. The PDZ-binding signature appears at 692-694 (SQV).

The protein belongs to the G-protein coupled receptor Fz/Smo family. In terms of assembly, component of a Wnt-signaling complex that contains a WNT protein, a FZD protein and LRP5 or LRP6. Interacts directly with LRP5 or LRP6; the interaction is promoted by Wnt-binding and signaling and inhibited by DKK1. Interacts with GPOC, RSPO1 and RSPO3. Interacts with glypican GPC3. In terms of processing, ubiquitinated by ZNRF3, leading to its degradation by the proteasome. As to expression, most abundant in fetal kidney, followed by brain and lung. In adult tissues, expressed in kidney, heart, pancreas and skeletal muscle.

The protein resides in the membrane. It localises to the golgi apparatus. Its subcellular location is the cell membrane. In terms of biological role, receptor for Wnt proteins. Component of the Wnt-Fzd-LRP5-LRP6 complex that triggers beta-catenin signaling through inducing aggregation of receptor-ligand complexes into ribosome-sized signalosomes. The beta-catenin canonical signaling pathway leads to the activation of disheveled proteins, inhibition of GSK-3 kinase, nuclear accumulation of beta-catenin and activation of Wnt target genes. A second signaling pathway involving PKC and calcium fluxes has been seen for some family members, but it is not yet clear if it represents a distinct pathway or if it can be integrated in the canonical pathway, as PKC seems to be required for Wnt-mediated inactivation of GSK-3 kinase. Both pathways seem to involve interactions with G-proteins. May be involved in transduction and intercellular transmission of polarity information during tissue morphogenesis and/or in differentiated tissues. Coreceptor along with RYK of Wnt proteins, such as WNT1. The sequence is that of Frizzled-8 (FZD8) from Homo sapiens (Human).